Reading from the N-terminus, the 117-residue chain is Large ribosomal subunit protein bL19 (117 aa).

Belongs to the bacterial ribosomal protein bL19 family.

This protein is located at the 30S-50S ribosomal subunit interface and may play a role in the structure and function of the aminoacyl-tRNA binding site. The protein is Large ribosomal subunit protein bL19 of Mycoplasmopsis pulmonis (strain UAB CTIP) (Mycoplasma pulmonis).